The following is a 295-amino-acid chain: UDP-N-acetylenolpyruvoylglucosamine reductase (295 aa).

The FAD-binding PCMH-type domain maps to 23–188; sequence QVGGPADFLA…ISAKFALKPG (166 aa). R167 is a catalytic residue. The active-site Proton donor is S217. Residue E287 is part of the active site.

It belongs to the MurB family. FAD serves as cofactor.

Its subcellular location is the cytoplasm. The catalysed reaction is UDP-N-acetyl-alpha-D-muramate + NADP(+) = UDP-N-acetyl-3-O-(1-carboxyvinyl)-alpha-D-glucosamine + NADPH + H(+). It functions in the pathway cell wall biogenesis; peptidoglycan biosynthesis. Cell wall formation. This chain is UDP-N-acetylenolpyruvoylglucosamine reductase, found in Streptococcus equi subsp. equi (strain 4047).